The sequence spans 291 residues: Nucleotide-binding protein lwe2422 (291 aa).

Residue 13-20 (GMSGAGKT) coordinates ATP. Position 63–66 (63–66 (DLRG)) interacts with GTP.

The protein belongs to the RapZ-like family.

Functionally, displays ATPase and GTPase activities. The sequence is that of Nucleotide-binding protein lwe2422 from Listeria welshimeri serovar 6b (strain ATCC 35897 / DSM 20650 / CCUG 15529 / CIP 8149 / NCTC 11857 / SLCC 5334 / V8).